The following is a 468-amino-acid chain: Anthocyanidin 3-O-glucoside 2'''-O-xylosyltransferase (468 aa).

Residues Ser284, 344-346 (IQQ), 361-369 (HCGFGSMWE), and 383-386 (HGEQ) contribute to the UDP-alpha-D-xylose site.

The protein belongs to the UDP-glycosyltransferase family.

It carries out the reaction an anthocyanidin 3-O-beta-D-glucoside + UDP-alpha-D-xylose = an anthocyanidin 3-O-beta-D-sambubioside + UDP + 2 H(+). Its pathway is secondary metabolite biosynthesis; flavonoid biosynthesis. Its function is as follows. Contributes to the last few anthocyanin biosynthetic steps. Converts cyanidin 3-O-glucoside to cyanidin 3-O-xylosyl(1-&gt;2)glucoside. Can use 3-O-glucosylated anthocyanidins/flavonols and uridine diphosphate (UDP)-xylose as substrates. In Arabidopsis thaliana (Mouse-ear cress), this protein is Anthocyanidin 3-O-glucoside 2'''-O-xylosyltransferase (A3G2XYLT).